Reading from the N-terminus, the 194-residue chain is Protein LURP-one-related 10 (194 aa).

The protein belongs to the LOR family.

In terms of biological role, might be related to the phospholipid scramblase and tubby-like superfamily of membrane tethered transcription factors. The sequence is that of Protein LURP-one-related 10 from Arabidopsis thaliana (Mouse-ear cress).